The chain runs to 493 residues: Cysteine sulfinic acid decarboxylase (493 aa).

K305 carries the post-translational modification N6-(pyridoxal phosphate)lysine.

The protein belongs to the group II decarboxylase family. In terms of assembly, homodimer. The cofactor is pyridoxal 5'-phosphate. In terms of tissue distribution, expressed in kidney and liver not detected in lymphoid tissues and lung. Expressed in kidney, liver and brain. 7 and 4 times higher expression in kidney and liver than in brain, respectively. Low level of detection in skeletal muscle. Expressed in brain, olfactory bulb, liver, skeletal muscle and kidney with the highest expression in liver and lowest in skeletal muscle (at protein level).

It catalyses the reaction L-aspartate + H(+) = beta-alanine + CO2. The enzyme catalyses 3-sulfino-L-alanine + H(+) = hypotaurine + CO2. The catalysed reaction is L-cysteate + H(+) = taurine + CO2. The protein operates within organosulfur biosynthesis; taurine biosynthesis; hypotaurine from L-cysteine: step 2/2. Its activity is regulated as follows. Activated by Mn(2+). Inhibited by bis-carboxymethyl-trithiocarbonate, ethylxanthogenacetic acid and 2,5-disulfoaniline. Not affected by Li(+) within 0.05-40 mM concentration range. Functionally, catalyzes the decarboxylation of L-aspartate, 3-sulfino-L-alanine (cysteine sulfinic acid), and L-cysteate to beta-alanine, hypotaurine and taurine, respectively. The preferred substrate is 3-sulfino-L-alanine. Does not exhibit any decarboxylation activity toward glutamate. The chain is Cysteine sulfinic acid decarboxylase from Mus musculus (Mouse).